Here is a 695-residue protein sequence, read N- to C-terminus: ATP-dependent zinc metalloprotease FTSH 2, chloroplastic (695 aa).

Residues 1–47 (MAASSACLVGNGLSVNTTTKQRLSKHFSGRQTSFSSVIRTSKVNVVK) constitute a chloroplast transit peptide. A thylakoid-targeting transit peptide spans 48–82 (ASLDGKKKQEGRRDFLKILLGNAGVGLVASGKANA). At 83-167 (DEQGVSSSRM…AHNAQEDQGS (85 aa)) the chain is on the lumenal, thylakoid side. The helical transmembrane segment at 168-188 (VLFNLIGNLAFPALLIGGLFL) threads the bilayer. At 189-695 (LSRRSGGGMG…PASAPTPAAV (507 aa)) the chain is on the stromal side. Residue 267–274 (GPPGTGKT) coordinates ATP. Histidine 488 contacts Zn(2+). The active site involves glutamate 489. Residues histidine 492 and aspartate 566 each coordinate Zn(2+). The interval 673–695 (PPENRVPSSTTTTPASAPTPAAV) is disordered. Over residues 679–695 (PSSTTTTPASAPTPAAV) the composition is skewed to low complexity.

It in the N-terminal section; belongs to the AAA ATPase family. The protein in the C-terminal section; belongs to the peptidase M41 family. Interacts with CHIP and FTSH5. Heterohexamers with FTSH1, FTSH5 and FTSH8. May also form homooligomers. Zn(2+) serves as cofactor. The FTSH2 precursor is ubiquitinated by CHIP in the cytoplasm. Expressed in cotyledons, cauline and rosette leaves, stems, sepals, flovers and siliques. Very low in roots.

The protein resides in the plastid. The protein localises to the chloroplast thylakoid membrane. Its function is as follows. Part of a complex that function as an ATP-dependent zinc metallopeptidase. Involved in the thylakoid formation and in the removal of damaged D1 in the photosystem II, preventing cell death under high-intensity light conditions, but not involved in thermotolerance. This Arabidopsis thaliana (Mouse-ear cress) protein is ATP-dependent zinc metalloprotease FTSH 2, chloroplastic (FTSH2).